Reading from the N-terminus, the 659-residue chain is WD repeat-containing protein 48 homolog (659 aa).

WD repeat units follow at residues 27-66 (RHRN…SQEP), 73-112 (HHND…CMST), 115-154 (THRD…ALTA), 166-205 (GSKD…KIAK), 208-247 (GHAE…CVQT), 250-289 (VHSE…NSVL), 292-331 (EERA…KLSF), and 337-376 (KGGA…KVED). A disordered region spans residues 592–613 (ASTGNSNSSQNNSQSDANSEGS). The segment covering 596–610 (NSNSSQNNSQSDANS) has biased composition (low complexity).

This sequence belongs to the WD repeat WDR48 family. As to quaternary structure, catalytic component of the Usp12-46 deubiquitylase complex consisting of Usp12-46, Wdr20 and Uaf1; regulatory subunit that, together wtih Wdr20, stabilizes Usp12-46. The Usp12-46 deubiquitylase complex associates with arr/arrow; the interaction leads to deubiquitination and stabilization of arr/arrow.

Functionally, regulatory component of the Usp12-46 deubiquitylase complex. activates deubiquitination by increasing the catalytic turnover without increasing the affinity of deubiquitinating enzymes for the substrate. The complex deubiquitylates the wg/wingless-signaling receptor arr/arrow, which stabilizes the receptor and increases its concentration at the cell surface; this enhances the sensitivity of cells to wg/wingless-signal stimulation. This increases the amplitude and spatial range of the signaling response to the wg/wingless morphogen gradient, facilitating the precise concentration-dependent regulation of its target genes. Together with Wdr20 and Usp12-46 required for wg/wingless-mediated signaling in the wing imaginal disc and for wg/wingless-dependent regulation of intestinal stem cell proliferation. The chain is WD repeat-containing protein 48 homolog from Aedes aegypti (Yellowfever mosquito).